The sequence spans 367 residues: Protein-glutamate methylesterase/protein-glutamine glutaminase 1 (367 aa).

In terms of domain architecture, Response regulatory spans 9–126 (KVLCVDDSAL…RDGMLDYSEK (118 aa)). Position 60 is a 4-aspartylphosphate (D60). Residues 168 to 360 (LVSTEKLIIV…RRIMARLASM (193 aa)) enclose the CheB-type methylesterase domain. Catalysis depends on residues S180, H206, and D302.

The protein belongs to the CheB family. Phosphorylated by CheA. Phosphorylation of the N-terminal regulatory domain activates the methylesterase activity.

It localises to the cytoplasm. The enzyme catalyses [protein]-L-glutamate 5-O-methyl ester + H2O = L-glutamyl-[protein] + methanol + H(+). It carries out the reaction L-glutaminyl-[protein] + H2O = L-glutamyl-[protein] + NH4(+). Its function is as follows. Involved in chemotaxis. Part of a chemotaxis signal transduction system that modulates chemotaxis in response to various stimuli. Catalyzes the demethylation of specific methylglutamate residues introduced into the chemoreceptors (methyl-accepting chemotaxis proteins or MCP) by CheR. Also mediates the irreversible deamidation of specific glutamine residues to glutamic acid. The sequence is that of Protein-glutamate methylesterase/protein-glutamine glutaminase 1 from Burkholderia pseudomallei (strain K96243).